Reading from the N-terminus, the 297-residue chain is N-acetylneuraminate lyase (297 aa).

Residues serine 47 and threonine 48 each contribute to the aceneuramate site. Tyrosine 137 (proton donor) is an active-site residue. The active-site Schiff-base intermediate with substrate is lysine 165. The aceneuramate site is built by threonine 167, glycine 189, aspartate 191, glutamate 192, and serine 208.

It belongs to the DapA family. NanA subfamily. Homotetramer.

It is found in the cytoplasm. The catalysed reaction is aceneuramate = aldehydo-N-acetyl-D-mannosamine + pyruvate. The protein operates within amino-sugar metabolism; N-acetylneuraminate degradation; D-fructose 6-phosphate from N-acetylneuraminate: step 1/5. Catalyzes the reversible aldol cleavage of N-acetylneuraminic acid (sialic acid; Neu5Ac) to form pyruvate and N-acetylmannosamine (ManNAc) via a Schiff base intermediate. The protein is N-acetylneuraminate lyase of Citrobacter koseri (strain ATCC BAA-895 / CDC 4225-83 / SGSC4696).